The primary structure comprises 342 residues: Protein BMEI1586 (342 aa).

S90 functions as the Proton acceptor in the catalytic mechanism. Substrate is bound by residues 91–92 (GS), D251, and 256–257 (GT).

The protein belongs to the proline racemase family. In terms of assembly, homotetramer.

It carries out the reaction trans-4-hydroxy-L-proline = cis-4-hydroxy-D-proline. In terms of biological role, in vitro, catalyzes the epimerization of trans-4-hydroxy-L-proline (t4LHyp) to cis-4-hydroxy-D-proline (c4DHyp) and that of trans-3-hydroxy-L-proline (t3LHyp) to cis-3-hydroxy-D-proline (c3DHyp), albeit with very low efficiency. The physiological substrate may be different. Displays neither proline racemase activity nor t3LHyp dehydratase activity. The sequence is that of Protein BMEI1586 from Brucella melitensis biotype 1 (strain ATCC 23456 / CCUG 17765 / NCTC 10094 / 16M).